Consider the following 176-residue polypeptide: ATP-dependent protease subunit HslV (176 aa).

The active site involves T2. Na(+)-binding residues include G157, C160, and T163.

It belongs to the peptidase T1B family. HslV subfamily. As to quaternary structure, a double ring-shaped homohexamer of HslV is capped on each side by a ring-shaped HslU homohexamer. The assembly of the HslU/HslV complex is dependent on binding of ATP.

Its subcellular location is the cytoplasm. It carries out the reaction ATP-dependent cleavage of peptide bonds with broad specificity.. Allosterically activated by HslU binding. Functionally, protease subunit of a proteasome-like degradation complex believed to be a general protein degrading machinery. The protein is ATP-dependent protease subunit HslV of Pseudomonas putida (strain ATCC 47054 / DSM 6125 / CFBP 8728 / NCIMB 11950 / KT2440).